Here is a 445-residue protein sequence, read N- to C-terminus: Probable glycine dehydrogenase (decarboxylating) subunit 1 (445 aa).

The protein belongs to the GcvP family. N-terminal subunit subfamily. In terms of assembly, the glycine cleavage system is composed of four proteins: P, T, L and H. In this organism, the P 'protein' is a heterodimer of two subunits.

The catalysed reaction is N(6)-[(R)-lipoyl]-L-lysyl-[glycine-cleavage complex H protein] + glycine + H(+) = N(6)-[(R)-S(8)-aminomethyldihydrolipoyl]-L-lysyl-[glycine-cleavage complex H protein] + CO2. Its function is as follows. The glycine cleavage system catalyzes the degradation of glycine. The P protein binds the alpha-amino group of glycine through its pyridoxal phosphate cofactor; CO(2) is released and the remaining methylamine moiety is then transferred to the lipoamide cofactor of the H protein. This is Probable glycine dehydrogenase (decarboxylating) subunit 1 from Anaeromyxobacter sp. (strain Fw109-5).